Consider the following 167-residue polypeptide: UPF0303 protein mlr5144 (167 aa).

Belongs to the UPF0303 family.

This is UPF0303 protein mlr5144 from Mesorhizobium japonicum (strain LMG 29417 / CECT 9101 / MAFF 303099) (Mesorhizobium loti (strain MAFF 303099)).